The following is a 69-amino-acid chain: Putative transmembrane protein ORF34 (69 aa).

2 helical membrane passes run 7–27 (LLSV…MMQF) and 42–62 (VSLM…IVYF).

The protein resides in the host membrane. The chain is Putative transmembrane protein ORF34 from Haloarcula hispanica (His1V).